Consider the following 124-residue polypeptide: Ribonuclease pancreatic (124 aa).

Basic and acidic residues predominate over residues 1-13 (KETSAQKFERQHM). Residues 1–25 (KETSAQKFERQHMDSTGSSSSSPTY) are disordered. The substrate site is built by Lys-7 and Arg-10. The active-site Proton acceptor is the His-12. Disulfide bonds link Cys-26-Cys-84, Cys-40-Cys-95, Cys-58-Cys-110, and Cys-65-Cys-72. Substrate contacts are provided by residues 41 to 45 (KPVNT), Lys-66, and Arg-85. His-119 acts as the Proton donor in catalysis.

The protein belongs to the pancreatic ribonuclease family. In terms of assembly, monomer. Interacts with and forms tight 1:1 complexes with RNH1. Dimerization of two such complexes may occur. Interaction with RNH1 inhibits this protein. As to expression, pancreas.

It localises to the secreted. It carries out the reaction an [RNA] containing cytidine + H2O = an [RNA]-3'-cytidine-3'-phosphate + a 5'-hydroxy-ribonucleotide-3'-[RNA].. The enzyme catalyses an [RNA] containing uridine + H2O = an [RNA]-3'-uridine-3'-phosphate + a 5'-hydroxy-ribonucleotide-3'-[RNA].. Endonuclease that catalyzes the cleavage of RNA on the 3' side of pyrimidine nucleotides. Acts on single-stranded and double-stranded RNA. The sequence is that of Ribonuclease pancreatic (RNASE1) from Ondatra zibethicus (Muskrat).